Consider the following 162-residue polypeptide: Lipoprotein signal peptidase (162 aa).

The next 2 helical transmembrane spans lie at 56-76 (FLPP…VVWY) and 84-104 (SPLF…NLID). Active-site residues include D113 and D139. The chain crosses the membrane as a helical span at residues 132–152 (WPIFNVADSCITIGACMIVLF).

Belongs to the peptidase A8 family.

It localises to the cell inner membrane. The catalysed reaction is Release of signal peptides from bacterial membrane prolipoproteins. Hydrolyzes -Xaa-Yaa-Zaa-|-(S,diacylglyceryl)Cys-, in which Xaa is hydrophobic (preferably Leu), and Yaa (Ala or Ser) and Zaa (Gly or Ala) have small, neutral side chains.. Its pathway is protein modification; lipoprotein biosynthesis (signal peptide cleavage). Its function is as follows. This protein specifically catalyzes the removal of signal peptides from prolipoproteins. In Chlorobaculum tepidum (strain ATCC 49652 / DSM 12025 / NBRC 103806 / TLS) (Chlorobium tepidum), this protein is Lipoprotein signal peptidase.